We begin with the raw amino-acid sequence, 318 residues long: Aspartate carbamoyltransferase catalytic subunit (318 aa).

Carbamoyl phosphate is bound by residues R57 and T58. Residue K85 coordinates L-aspartate. The carbamoyl phosphate site is built by R107, H141, and Q144. L-aspartate contacts are provided by R174 and R228. G269 and P270 together coordinate carbamoyl phosphate.

Belongs to the aspartate/ornithine carbamoyltransferase superfamily. ATCase family. Heterododecamer (2C3:3R2) of six catalytic PyrB chains organized as two trimers (C3), and six regulatory PyrI chains organized as three dimers (R2).

It catalyses the reaction carbamoyl phosphate + L-aspartate = N-carbamoyl-L-aspartate + phosphate + H(+). The protein operates within pyrimidine metabolism; UMP biosynthesis via de novo pathway; (S)-dihydroorotate from bicarbonate: step 2/3. Catalyzes the condensation of carbamoyl phosphate and aspartate to form carbamoyl aspartate and inorganic phosphate, the committed step in the de novo pyrimidine nucleotide biosynthesis pathway. The polypeptide is Aspartate carbamoyltransferase catalytic subunit (Mycolicibacterium smegmatis (strain ATCC 700084 / mc(2)155) (Mycobacterium smegmatis)).